We begin with the raw amino-acid sequence, 757 residues long: Two pore calcium channel protein 1 (757 aa).

The Cytoplasmic segment spans residues 1–94 (MRERGEMREA…NDTRFERAMR (94 aa)). A disordered region spans residues 24 to 48 (HSHGSGSSGTGSHTSGGGGGWRGSR). Gly residues predominate over residues 29-45 (GSSGTGSHTSGGGGGWR). A helical transmembrane segment spans residues 95 to 115 (FYFVYLRLDWLWSLNLFALIL). The Extracellular segment spans residues 116–152 (LNFLEKPLWCRGYSQHACDQRDLYFLGQLPYLSKTES). A helical transmembrane segment spans residues 153–173 (LIYEGLTLVILVMDIFYPLSY). Residues 174 to 188 (EGLNLFWKNTINKLK) lie on the Cytoplasmic side of the membrane. A helical transmembrane segment spans residues 189-209 (VLLLFILACDILVFAFSPQPF). Position 210 (R210) is a topological domain, extracellular. A helical; Voltage-sensor membrane pass occupies residues 211 to 228 (VAPYIRVAFLIMNIRELR). Over 229 to 233 (MCAVT) the chain is Cytoplasmic. Residues 234–254 (LVGMVGTYLNVLALSLLFLLF) form a helical membrane-spanning segment. Topologically, residues 255-270 (ASWLAYVTFEDTPQGK) are extracellular. An intramembrane region (pore-forming) is located at residues 271-285 (TVFSSYGTTLYQMFI). Over 286 to 308 (LFTTSNNPDVWVPAYKSSRWSSL) the chain is Extracellular. Residues 309–329 (FFIVYVLLGVYFLTNLILAVI) traverse the membrane as a helical segment. Residues 330-453 (YDSFKEQLAK…LCEWLKSFVR (124 aa)) are Cytoplasmic-facing. 2 EF-hand domains span residues 347–382 (TRKS…LNKY) and 388–423 (TSRE…IAIK). The helical transmembrane segment at 454 to 474 (SPLFEYIVIFVLLMNLVAVII) threads the bilayer. Over 475 to 493 (ETTLDIENSSSQKVWQEVE) the chain is Extracellular. A glycan (N-linked (GlcNAc...) asparagine) is linked at N482. The helical transmembrane segment at 494–514 (FVFGWIYVIEMALKIFSLGFG) threads the bilayer. At 515–523 (AYWMEGQNK) the chain is on the cytoplasmic side. A helical transmembrane segment spans residues 524 to 544 (FDFVLTWTIFIGETLTFAFPS). Topologically, residues 545 to 553 (KLSFLSNGE) are extracellular. The chain crosses the membrane as a helical; Voltage-sensor span at residues 554-571 (WIRYLLLGRMLRLTRILL). Topologically, residues 572–595 (QVRRFRAFVATFFTLMSSLMPYLG) are cytoplasmic. Residues 596–616 (IVFCTLCIYCSLGLQIFGGIV) traverse the membrane as a helical segment. The Extracellular portion of the chain corresponds to 617 to 640 (YAGNPTLEETDLFSNDYLLFNFND). An intramembrane region (pore-forming) is located at residues 641 to 655 (YPSGMVTLFNLLVMG). Over 656–676 (NWQAWMESYRQLTGSYWSLIY) the chain is Extracellular. The helical transmembrane segment at 677–697 (FVSFYLISVLLLLNLIVAFVL) threads the bilayer. Residues 698 to 757 (EAFFAEMELEKDGEADIQDPTLEGRNRRRSVRVRTKGTMVDILLHHMLSNELDGSQNRDQ) lie on the Cytoplasmic side of the membrane.

The protein belongs to the calcium channel alpha-1 subunit (TC 1.A.1.11) family. Two pore calcium channel subfamily. Homodimer. As to expression, expressed in shoot, mature leaf, cultured cells, and at lower level in roots.

It localises to the membrane. Inhibited by the VDCC blocker verapamil in yeast cells. Channel activity may be down-regulated by cytosolic Ca(2+) in rice cells. Inhibited by Al(3+). In terms of biological role, may function as one of the major voltage-gated Ca(2+) channel (VDCC) across the plasma membrane. May be involved in the regulation of cytosolic Ca(2+) and in growth and development. Acts as the major ROS-responsive Ca(2+) channel and is the possible target of Al-dependent inhibition. Determines sensitivity to T.viride xylanase elicitor. Plays a regulatory role in elicitor-induced defense responses and hypersensitive cell death. This is Two pore calcium channel protein 1 (TPC1) from Oryza sativa subsp. japonica (Rice).